The sequence spans 336 residues: Phosphate acyltransferase (336 aa).

This sequence belongs to the PlsX family. In terms of assembly, homodimer. Probably interacts with PlsY.

The protein resides in the cytoplasm. It catalyses the reaction a fatty acyl-[ACP] + phosphate = an acyl phosphate + holo-[ACP]. It functions in the pathway lipid metabolism; phospholipid metabolism. Its function is as follows. Catalyzes the reversible formation of acyl-phosphate (acyl-PO(4)) from acyl-[acyl-carrier-protein] (acyl-ACP). This enzyme utilizes acyl-ACP as fatty acyl donor, but not acyl-CoA. This Pseudomonas fluorescens (strain Pf0-1) protein is Phosphate acyltransferase.